A 1430-amino-acid chain; its full sequence is Target of rapamycin complex 2 subunit TSC11 (1430 aa).

A disordered region spans residues 1–62 (MSIPHSAKQS…TITNESSKRN (62 aa)). Polar residues-rich tracts occupy residues 7 to 26 (AKQS…TTPL) and 35 to 44 (NSSTQISSAK). Ser-19 is modified (phosphoserine). Residues 45–57 (NITSSSPSTITNE) show a composition bias toward low complexity. Phosphoserine occurs at positions 81, 84, 87, and 141. Positions 91-180 (ARRTRSTMTK…EKHIFDLKQQ (90 aa)) form a coiled coil. The interval 182–285 (DKKRQRSLTT…NLTGDTEKDL (104 aa)) is disordered. Residues 233 to 265 (TTPTSGTERNSQQNLNRNSTVNSRNNENHSTLS) are compositionally biased toward polar residues. One can recognise an N-terminal Ras-GEF domain in the interval 995 to 1100 (SVVAVADQAL…FQQKSRLPLH (106 aa)).

This sequence belongs to the RICTOR family. The target of rapamycin complex 2 (TORC2) is composed of at least AVO1, AVO2, BIT61, LST8, TOR2 and TSC11. TORC2 forms a homodimer. Contrary to TORC1, TORC2 does not bind to and is not sensitive to FKBP-rapamycin. TSC11 binds to the N-terminal HEAT repeat region in TOR2 and is required for TORC2 integrity by tethering AVO1 and AVO2 to the complex. Phosphorylated by TOR2; when part of TORC2.

It localises to the cell membrane. The protein resides in the vacuole membrane. Essential component of TORC2, which regulates cell cycle-dependent polarization of the actin-cytoskeleton and cell wall integrity. TORC2 controls polarity of the actin cytoskeleton, which is required for orienting the secretory pathway toward discrete growth sites, via the RHO1/PKC1/MAPK cell integrity pathway. TSC11 may exert its functions through two distinct mechanisms, one mediated by AVO1 and the other mediated by AVO2 and SLM1. This is Target of rapamycin complex 2 subunit TSC11 (TSC11) from Saccharomyces cerevisiae (strain ATCC 204508 / S288c) (Baker's yeast).